The sequence spans 416 residues: Gasdermin-B (416 aa).

The interval methionine 1 to leucine 280 is triggers pyroptosis. The next 2 beta stranded transmembrane spans lie at glutamate 83 to proline 101 and lysine 102 to isoleucine 125. (Microbial infection) Glycyl lysine isopeptide (Lys-Gly) (interchain with G-Cter in ubiquitin) cross-links involve residues lysine 166, lysine 177, lysine 190, and lysine 192. 2 consecutive transmembrane segments (beta stranded) span residues glutamate 167–serine 183 and glutamine 184–threonine 198. Positions lysine 229 to aspartate 250 are disordered. Positions serine 248 to valine 276 form a coiled coil. Methionine 308 participates in a covalent cross-link: (Microbial infection) Glycyl lysine isopeptide (Lys-Gly) (interchain with G-Cter in ubiquitin).

The protein belongs to the gasdermin family. Homooligomer; homooligomeric ring-shaped pore complex containing 24-26 subunits when inserted in the membrane. Cleavage by granzyme A (GZMA) relieves autoinhibition by releasing the N-terminal moiety (Gasdermin-B, N-terminal) that initiates pyroptosis. Not cleaved by other granzymes. Major cleavage site takes places after Lys-244; a minor cleavage site takes place after Lys-229. Cleavage by neutrophil elastase ELANE, inhibits its ability to trigger pyroptosis. Post-translationally, palmitoylated. In terms of processing, (Microbial infection) Ubiquitinated by S.flexneri IpaH7.8, leading to its degradation by the proteasome, thereby preventing its ability to form pores in bacterial-derived membranes. In terms of tissue distribution, in the gastrointestinal tract, expressed in proliferating cells, including in the basal cell layer of esophagus and in isthmus/neck of stomach.

The protein resides in the cytoplasm. The protein localises to the cell membrane. With respect to regulation, the full-length protein before cleavage is inactive: intramolecular interactions between N- and C-terminal domains mediate autoinhibition in the absence of activation signal. The intrinsic pyroptosis-inducing activity is carried by the released N-terminal moiety (Gasdermin-B, N-terminal) following cleavage by granzyme A (GZMA). Its function is as follows. Precursor of a pore-forming protein that acts as a downstream mediator of granzyme-mediated cell death. This form constitutes the precursor of the pore-forming protein: upon cleavage, the released N-terminal moiety (Gasdermin-B, N-terminal) binds to membranes and forms pores, triggering pyroptosis. Also acts as a regulator of epithelial cell repair independently of programmed cell death: translocates to the plasma membrane and promotes epithelial maintenance and repair by regulating PTK2/FAK-mediated phosphorylation of PDGFA. In terms of biological role, pore-forming protein produced by cleavage by granzyme A (GZMA), which causes membrane permeabilization and pyroptosis in target cells of cytotoxic T and natural killer (NK) cells. Key downstream mediator of granzyme-mediated cell death: (1) granzyme A (GZMA), delivered to target cells from cytotoxic T- and NK-cells, (2) specifically cleaves Gasdermin-B to generate this form. After cleavage, moves to the plasma membrane, homooligomerizes within the membrane and forms pores of 10-15 nanometers (nm) of inner diameter, triggering pyroptosis. The different isoforms recognize and bind different phospholipids on membranes, promoting cell death of different target cells. Functionally, precursor of a pore-forming protein that acts as a downstream mediator of granzyme-mediated cell death and mediates pyroptosis. Following cleavage and activation by granzyme A (GZMA), the N-terminal part binds to membrane inner leaflet lipids, homooligomerizes within the human plasma membrane and forms pores of 10-15 nanometers (nm) of inner diameter, triggering pyroptosis. Recognizes and binds membrane inner leaflet lipids of human cells, such as phosphatidylinositol 4-phosphate, phosphatidylinositol 5-phosphate, bisphosphorylated phosphatidylinositols, such as phosphatidylinositol (4,5)-bisphosphate, and more weakly to phosphatidic acid. Also binds sufatide, a component of the apical membrane of epithelial cells. Precursor of a pore-forming protein that acts as a downstream mediator of granzyme-mediated cell death and mediates pyroptosis of human cells. Following cleavage and activation by granzyme A (GZMA), the N-terminal part binds to membrane inner leaflet lipids, homooligomerizes within the human plasma membrane and forms pores of 10-15 nanometers (nm) of inner diameter, triggering pyroptosis. Its function is as follows. Precursor of a pore-forming protein that acts as a downstream mediator of granzyme-mediated cell death and specifically mediates cell death of Gram-negative bacteria in response to infection. Following cleavage and activation by granzyme A (GZMA), the N-terminal part recognizes and binds phospholipids found on Gram-negative bacterial membranes, such as lipid A and cariolipin, homooligomerizes within the bacterial membranes and forms pores, triggering pyroptosis followed by cell death. In contrast to isoform 4, does not bind to membrane inner leaflet lipids of host human cell, such as phosphatidylinositol 4-phosphate, phosphatidylinositol 5-phosphate, bisphosphorylated phosphatidylinositols, such as phosphatidylinositol (4,5)-bisphosphate. In terms of biological role, not able to trigger pyroptosis. The protein is Gasdermin-B of Homo sapiens (Human).